The primary structure comprises 383 residues: 8-amino-7-oxononanoate synthase (383 aa).

Arg-23 contacts substrate. Pyridoxal 5'-phosphate is bound at residue 110-111 (GF). His-135 contributes to the substrate binding site. The pyridoxal 5'-phosphate site is built by Ser-181, His-209, and Thr-235. Lys-238 bears the N6-(pyridoxal phosphate)lysine mark. Thr-351 provides a ligand contact to substrate.

This sequence belongs to the class-II pyridoxal-phosphate-dependent aminotransferase family. BioF subfamily. As to quaternary structure, homodimer. The cofactor is pyridoxal 5'-phosphate.

The enzyme catalyses 6-carboxyhexanoyl-[ACP] + L-alanine + H(+) = (8S)-8-amino-7-oxononanoate + holo-[ACP] + CO2. Its pathway is cofactor biosynthesis; biotin biosynthesis. Functionally, catalyzes the decarboxylative condensation of pimeloyl-[acyl-carrier protein] and L-alanine to produce 8-amino-7-oxononanoate (AON), [acyl-carrier protein], and carbon dioxide. The polypeptide is 8-amino-7-oxononanoate synthase (Aliivibrio fischeri (strain ATCC 700601 / ES114) (Vibrio fischeri)).